The primary structure comprises 333 residues: Holliday junction branch migration complex subunit RuvB (333 aa).

The tract at residues Met-1–Tyr-182 is large ATPase domain (RuvB-L). ATP contacts are provided by residues Leu-21, Arg-22, Gly-63, Lys-66, Thr-67, Thr-68, Glu-129–Phe-131, Arg-172, Tyr-182, and Arg-219. Residue Thr-67 participates in Mg(2+) binding. Positions Thr-183–Gln-253 are small ATPAse domain (RuvB-S). The tract at residues Lys-256 to Val-333 is head domain (RuvB-H). DNA is bound by residues Arg-311 and Arg-316.

The protein belongs to the RuvB family. As to quaternary structure, homohexamer. Forms an RuvA(8)-RuvB(12)-Holliday junction (HJ) complex. HJ DNA is sandwiched between 2 RuvA tetramers; dsDNA enters through RuvA and exits via RuvB. An RuvB hexamer assembles on each DNA strand where it exits the tetramer. Each RuvB hexamer is contacted by two RuvA subunits (via domain III) on 2 adjacent RuvB subunits; this complex drives branch migration. In the full resolvosome a probable DNA-RuvA(4)-RuvB(12)-RuvC(2) complex forms which resolves the HJ.

It is found in the cytoplasm. The enzyme catalyses ATP + H2O = ADP + phosphate + H(+). Functionally, the RuvA-RuvB-RuvC complex processes Holliday junction (HJ) DNA during genetic recombination and DNA repair, while the RuvA-RuvB complex plays an important role in the rescue of blocked DNA replication forks via replication fork reversal (RFR). RuvA specifically binds to HJ cruciform DNA, conferring on it an open structure. The RuvB hexamer acts as an ATP-dependent pump, pulling dsDNA into and through the RuvAB complex. RuvB forms 2 homohexamers on either side of HJ DNA bound by 1 or 2 RuvA tetramers; 4 subunits per hexamer contact DNA at a time. Coordinated motions by a converter formed by DNA-disengaged RuvB subunits stimulates ATP hydrolysis and nucleotide exchange. Immobilization of the converter enables RuvB to convert the ATP-contained energy into a lever motion, pulling 2 nucleotides of DNA out of the RuvA tetramer per ATP hydrolyzed, thus driving DNA branch migration. The RuvB motors rotate together with the DNA substrate, which together with the progressing nucleotide cycle form the mechanistic basis for DNA recombination by continuous HJ branch migration. Branch migration allows RuvC to scan DNA until it finds its consensus sequence, where it cleaves and resolves cruciform DNA. The protein is Holliday junction branch migration complex subunit RuvB of Bacillus anthracis (strain A0248).